A 729-amino-acid chain; its full sequence is Bromo and FHA domain-containing protein DDB_G0267958 (729 aa).

Low complexity predominate over residues Leu46–Thr79. The tract at residues Leu46 to Ala83 is disordered. Positions Leu112–Phe167 constitute an FHA domain. 3 stretches are compositionally biased toward low complexity: residues Ile208 to Ile221, Pro229 to Thr275, and Pro283 to Lys306. Disordered regions lie at residues Ile208–Lys361 and Ser403–Pro442. Positions Asp310–Val341 are enriched in acidic residues. The stretch at Asp315–Lys352 forms a coiled coil. Positions Pro406 to Lys431 are enriched in low complexity. The region spanning Ser498–Ser617 is the Bromo domain. A coiled-coil region spans residues Ser659–Asp718. The tract at residues Ser659 to Gln729 is disordered. Over residues Gln668–Gln729 the composition is skewed to acidic residues.

The chain is Bromo and FHA domain-containing protein DDB_G0267958 from Dictyostelium discoideum (Social amoeba).